The chain runs to 342 residues: Nicotinate-nucleotide--dimethylbenzimidazole phosphoribosyltransferase (342 aa).

Glu-311 functions as the Proton acceptor in the catalytic mechanism.

The protein belongs to the CobT family.

It carries out the reaction 5,6-dimethylbenzimidazole + nicotinate beta-D-ribonucleotide = alpha-ribazole 5'-phosphate + nicotinate + H(+). It participates in nucleoside biosynthesis; alpha-ribazole biosynthesis; alpha-ribazole from 5,6-dimethylbenzimidazole: step 1/2. Functionally, catalyzes the synthesis of alpha-ribazole-5'-phosphate from nicotinate mononucleotide (NAMN) and 5,6-dimethylbenzimidazole (DMB). The sequence is that of Nicotinate-nucleotide--dimethylbenzimidazole phosphoribosyltransferase from Shewanella sediminis (strain HAW-EB3).